Reading from the N-terminus, the 279-residue chain is RRP15-like protein (279 aa).

3 disordered regions span residues 1 to 40, 56 to 120, and 200 to 279; these read MALLTAKRPKKEAAPATDTSNNESDSEDSQNVDGDTGANA, GPTV…TERR, and KSTA…DEED. The span at 73-83 shows a compositional bias: basic and acidic residues; the sequence is KTSEAAKKPGF. Acidic residues-rich tracts occupy residues 93 to 104 and 213 to 224; these read KEEDDDDEEDGD and QETDDDDEDDTA. Positions 232–245 are enriched in basic and acidic residues; that stretch reads KKSEWNVLREDFMT. Over residues 267-279 the composition is skewed to acidic residues; that stretch reads DEADDSDDDDEED.

The protein belongs to the RRP15 family.

The protein is RRP15-like protein of Drosophila pseudoobscura pseudoobscura (Fruit fly).